The sequence spans 561 residues: Urocanate hydratase (561 aa).

NAD(+) contacts are provided by residues 52 to 53 (GG), Gln130, 176 to 178 (GMG), Glu196, Arg201, 242 to 243 (NA), 263 to 267 (QTSAH), 273 to 274 (YL), and Tyr322. Cys410 is an active-site residue. Gly492 provides a ligand contact to NAD(+).

The protein belongs to the urocanase family. NAD(+) serves as cofactor.

The protein resides in the cytoplasm. The catalysed reaction is 4-imidazolone-5-propanoate = trans-urocanate + H2O. It functions in the pathway amino-acid degradation; L-histidine degradation into L-glutamate; N-formimidoyl-L-glutamate from L-histidine: step 2/3. Its function is as follows. Catalyzes the conversion of urocanate to 4-imidazolone-5-propionate. In Salmonella choleraesuis (strain SC-B67), this protein is Urocanate hydratase.